Consider the following 280-residue polypeptide: 4-diphosphocytidyl-2-C-methyl-D-erythritol kinase (280 aa).

Residue K8 is part of the active site. Position 91-101 (91-101 (PVSAGLAGGSS)) interacts with ATP. The active site involves D133.

Belongs to the GHMP kinase family. IspE subfamily.

It catalyses the reaction 4-CDP-2-C-methyl-D-erythritol + ATP = 4-CDP-2-C-methyl-D-erythritol 2-phosphate + ADP + H(+). The protein operates within isoprenoid biosynthesis; isopentenyl diphosphate biosynthesis via DXP pathway; isopentenyl diphosphate from 1-deoxy-D-xylulose 5-phosphate: step 3/6. Functionally, catalyzes the phosphorylation of the position 2 hydroxy group of 4-diphosphocytidyl-2C-methyl-D-erythritol. This is 4-diphosphocytidyl-2-C-methyl-D-erythritol kinase from Clostridium novyi (strain NT).